The primary structure comprises 537 residues: O-phosphoserine--tRNA(Cys) ligase (537 aa).

Residues His-186–Thr-188, Ser-231–Ser-233, Tyr-273–Tyr-274, and Asn-317 contribute to the substrate site.

It belongs to the class-II aminoacyl-tRNA synthetase family. O-phosphoseryl-tRNA(Cys) synthetase subfamily. In terms of assembly, homotetramer. Interacts with SepCysS.

The catalysed reaction is tRNA(Cys) + O-phospho-L-serine + ATP = O-phospho-L-seryl-tRNA(Cys) + AMP + diphosphate. Functionally, catalyzes the attachment of O-phosphoserine (Sep) to tRNA(Cys). The chain is O-phosphoserine--tRNA(Cys) ligase from Methanococcus vannielii (strain ATCC 35089 / DSM 1224 / JCM 13029 / OCM 148 / SB).